Here is a 255-residue protein sequence, read N- to C-terminus: uncharacterized protein (255 aa).

Positions 1–28 are cleaved as a signal peptide; that stretch reads MFKLNFKNNYKVLTLLFSLTLSMFVSNA. Residues asparagine 38, asparagine 61, and asparagine 83 are each glycosylated (N-linked (GlcNAc...) asparagine).

It localises to the secreted. This is an uncharacterized protein from Dictyostelium discoideum (Social amoeba).